A 453-amino-acid polypeptide reads, in one-letter code: Kynureninase (453 aa).

Pyridoxal 5'-phosphate is bound by residues leucine 114, threonine 115, 142–145 (FPSD), aspartate 232, histidine 235, and tyrosine 257. N6-(pyridoxal phosphate)lysine is present on lysine 258. Tryptophan 286 serves as a coordination point for pyridoxal 5'-phosphate.

It belongs to the kynureninase family. As to quaternary structure, homodimer. It depends on pyridoxal 5'-phosphate as a cofactor.

It localises to the cytoplasm. The enzyme catalyses L-kynurenine + H2O = anthranilate + L-alanine + H(+). It catalyses the reaction 3-hydroxy-L-kynurenine + H2O = 3-hydroxyanthranilate + L-alanine + H(+). Its pathway is amino-acid degradation; L-kynurenine degradation; L-alanine and anthranilate from L-kynurenine: step 1/1. It participates in cofactor biosynthesis; NAD(+) biosynthesis; quinolinate from L-kynurenine: step 2/3. Its function is as follows. Catalyzes the cleavage of L-kynurenine (L-Kyn) and L-3-hydroxykynurenine (L-3OHKyn) into anthranilic acid (AA) and 3-hydroxyanthranilic acid (3-OHAA), respectively. The protein is Kynureninase of Cryptococcus neoformans var. neoformans serotype D (strain JEC21 / ATCC MYA-565) (Filobasidiella neoformans).